Consider the following 50-residue polypeptide: MSHNLEKVIEHNVAQERESFKEFVEKIFEENYTDQFTNQASDDIITKSTN.

This is an uncharacterized protein from Escherichia coli (Bacteriophage T4).